A 134-amino-acid chain; its full sequence is Probable thionin-2.4 (134 aa).

The signal sequence occupies residues 1–24; the sequence is MEGKTLIVSVLIMSLFMAQNQVDA. Cystine bridges form between Cys-27/Cys-64, Cys-28/Cys-56, and Cys-40/Cys-50. The propeptide at 71–134 is acidic domain; the sequence is DILENTGDAV…KGSMNAVENA (64 aa).

It belongs to the plant thionin (TC 1.C.44) family.

It is found in the secreted. In terms of biological role, thionins are small plant proteins which are toxic to animal cells. They seem to exert their toxic effect at the level of the cell membrane. Their precise function is not known. In Arabidopsis thaliana (Mouse-ear cress), this protein is Probable thionin-2.4.